Reading from the N-terminus, the 113-residue chain is Ribonuclease P protein component (113 aa).

It belongs to the RnpA family. As to quaternary structure, consists of a catalytic RNA component (M1 or rnpB) and a protein subunit.

It catalyses the reaction Endonucleolytic cleavage of RNA, removing 5'-extranucleotides from tRNA precursor.. In terms of biological role, RNaseP catalyzes the removal of the 5'-leader sequence from pre-tRNA to produce the mature 5'-terminus. It can also cleave other RNA substrates such as 4.5S RNA. The protein component plays an auxiliary but essential role in vivo by binding to the 5'-leader sequence and broadening the substrate specificity of the ribozyme. The sequence is that of Ribonuclease P protein component from Ligilactobacillus salivarius (strain UCC118) (Lactobacillus salivarius).